The sequence spans 149 residues: MADQLTDEQISEFKEAFSLFDKDGDGCITTKELGTVMRSLGQNPTEAELQDMINEVDADGNGTIDFPEFLNLMAKKMKDTDSEEELKEAFRVFDKDQNGFISAAELRHVMTNLGEKLTDEEVEEMIREADVDGDGQINYEEFVKIMMAK.

EF-hand domains are found at residues 8-43 (EQIS…LGQN), 44-79 (PTEA…KMKD), 81-116 (DSEE…LGEK), and 117-149 (LTDE…MMAK). 19 residues coordinate Ca(2+): aspartate 21, aspartate 23, aspartate 25, cysteine 27, glutamate 32, aspartate 57, aspartate 59, asparagine 61, threonine 63, glutamate 68, aspartate 94, aspartate 96, asparagine 98, glutamate 105, aspartate 130, aspartate 132, aspartate 134, glutamine 136, and glutamate 141.

It belongs to the calmodulin family. In terms of assembly, interacts with ZAR1 (via CaMBD domain). Binds to IQD1. Binds to MEE62 in a calcium-dependent manner.

The protein resides in the cytoplasm. It localises to the cell membrane. In terms of biological role, calmodulin mediates the control of a large number of enzymes, ion channels and other proteins by Ca(2+). Among the enzymes to be stimulated by the calmodulin-Ca(2+) complex are a number of protein kinases and phosphatases. The protein is Calmodulin-1 (CAM1) of Arabidopsis thaliana (Mouse-ear cress).